We begin with the raw amino-acid sequence, 242 residues long: Serine hydrolase cnsH (242 aa).

Residues S56, D138, and H216 each act as charge relay system in the active site.

Belongs to the AB hydrolase 3 family.

Its pathway is alkaloid biosynthesis. Functionally, serine hydrolase; part of the gene cluster that mediates the biosynthesis of communesins, a prominent class of indole alkaloids with great potential as pharmaceuticals. Communesins are biosynthesized by the coupling of tryptamine and aurantioclavine, two building blocks derived from L-tryptophan. The L-tryptophan decarboxylase cnsB converts L-tryptophan to tryptamine, whereas the tryptophan dimethylallyltransferase cnsF converts L-tryptophan to 4-dimethylallyl tryptophan which is further transformed to aurantioclavine by the aurantioclavine synthase cnsA, probably aided by the catalase cnsD. The cytochrome P450 monooxygenase cnsC catalyzes the heterodimeric coupling between the two different indole moieties, tryptamine and aurantioclavine, to construct vicinal quaternary stereocenters and yield the heptacyclic communesin scaffold. The O-methyltransferase cnsE then methylates the communesin scaffold to produce communesin K, the simplest characterized communesin that contains the heptacyclic core. The dioxygenase cnsJ converts communesin K into communesin I. Acylation to introduce the hexadienyl group at position N16 of communesin I by the acyltransferase cnsK leads to the production of communesin B. The hexadienyl group is produced by the highly reducing polyketide synthase cnsI, before being hydrolytically removed from cnsI by the serine hydrolase cnsH, converted into hexadienyl-CoA by the CoA ligase cnsG, and then transferred to communesin I by cnsK. Surprisingly, cnsK may also be a promiscuous acyltransferase that can tolerate a range of acyl groups, including acetyl-, propionyl-, and butyryl-CoA, which lead to communesins A, G and H respectively. The roles of the alpha-ketoglutarate-dependent dioxygenases cnsM and cnsP have still to be determined. The polypeptide is Serine hydrolase cnsH (Penicillium expansum (Blue mold rot fungus)).